The chain runs to 328 residues: uncharacterized protein (328 aa).

In terms of domain architecture, G-patch spans Lys10 to Ser55. Residues Glu97 to Arg291 are disordered. Residues Phe101–Lys110 show a composition bias toward basic residues. Residues Ser116 to Ser126 show a composition bias toward acidic residues. Composition is skewed to low complexity over residues Asp141 to Ser158 and Ser210 to Glu240. Residues Lys248–Lys257 show a composition bias toward basic residues.

This is an uncharacterized protein from Dictyostelium discoideum (Social amoeba).